Consider the following 183-residue polypeptide: MAQTGFGRRYFKAFVSGFFVAVPVTVTVLDRLAYVARVEGASMQPSLNPDGESSPDVVLLNRWSVRNYHVQRGDIVSVLSPKNPQQKIIKRVIGIEGDFIKTLGYKNRYVRVPDGHLWIEGDHHGHSFDSNAFGPVSLGLVHGRASHIIWPPSRWQRIEPSVPPDRRPLLNWDRAAEDKYDDD.

Residues 13-35 traverse the membrane as a helical segment; it reads AFVSGFFVAVPVTVTVLDRLAYV. Residues S42 and K90 contribute to the active site. The disordered stretch occupies residues 161-183; that stretch reads SVPPDRRPLLNWDRAAEDKYDDD. Basic and acidic residues predominate over residues 164-183; sequence PDRRPLLNWDRAAEDKYDDD.

This sequence belongs to the peptidase S26 family. IMP2 subfamily. In terms of assembly, heterodimer of 2 subunits, IMMPL1 and IMMPL2.

Its subcellular location is the mitochondrion inner membrane. Catalyzes the removal of transit peptides required for the targeting of proteins from the mitochondrial matrix, across the inner membrane, into the inter-membrane space. The chain is Mitochondrial inner membrane protease subunit 2 (immp2l) from Danio rerio (Zebrafish).